Reading from the N-terminus, the 434-residue chain is MKKNIIVLGAQWGDEGKGKVIDFLSKNINYVVRCQGGNNAGHTVVIKEEKTVLHLLPSSILNKNTINIISSGVVISPIDLVKEINMIEKKGISIKNRILISELCPLVLKYHVSMDVAREKNRKKKEIDSIGTTHRGIGPAYEDKIARRALRIHHLINKDKFKKKLKNIVEYYNFQLINYYKEQPVNHEKIFNELINKSKLLNNISIDIPSYLNSINKKNKSIIFEGAQGALLDIDYGTYPYVTSSNTTVGGIISSTGISPFSIKYILGIIKAYSTRVGNGPFPTEIFDETKNIILEKGKEFGSTTGRKRRIGWFDAVAVKRVIQINSFSGFCLTKIDVLDNIKEIKICTSYILPNGKILDNISNIDDWNKAKPIYKSMPGWLSKTKGVKNFKNLPILAKNYIKKLQSIIKIPIEIISTGSDRNDIIVLNKKLVE.

GTP contacts are provided by residues 13 to 19 (GDEGKGK) and 41 to 43 (GHT). D14 functions as the Proton acceptor in the catalytic mechanism. Mg(2+) contacts are provided by D14 and G41. Residues 14-17 (DEGK), 39-42 (NAGH), T133, R147, Q228, T243, and R307 contribute to the IMP site. The active-site Proton donor is H42. 303 to 309 (STTGRKR) is a binding site for substrate. GTP is bound by residues R309, 335–337 (KID), and 417–419 (STG).

The protein belongs to the adenylosuccinate synthetase family. Homodimer. It depends on Mg(2+) as a cofactor.

The protein localises to the cytoplasm. It catalyses the reaction IMP + L-aspartate + GTP = N(6)-(1,2-dicarboxyethyl)-AMP + GDP + phosphate + 2 H(+). The protein operates within purine metabolism; AMP biosynthesis via de novo pathway; AMP from IMP: step 1/2. Functionally, plays an important role in the de novo pathway of purine nucleotide biosynthesis. Catalyzes the first committed step in the biosynthesis of AMP from IMP. The sequence is that of Adenylosuccinate synthetase from Wigglesworthia glossinidia brevipalpis.